The primary structure comprises 419 residues: Enolase (419 aa).

(2R)-2-phosphoglycerate is bound at residue Gln-161. Residue Glu-205 is the Proton donor of the active site. Mg(2+) contacts are provided by Asp-240, Glu-283, and Asp-309. (2R)-2-phosphoglycerate-binding residues include Lys-334, Arg-363, Ser-364, and Lys-385. The active-site Proton acceptor is the Lys-334.

This sequence belongs to the enolase family. The cofactor is Mg(2+).

Its subcellular location is the cytoplasm. The protein localises to the secreted. It is found in the cell surface. The catalysed reaction is (2R)-2-phosphoglycerate = phosphoenolpyruvate + H2O. It functions in the pathway carbohydrate degradation; glycolysis; pyruvate from D-glyceraldehyde 3-phosphate: step 4/5. Functionally, catalyzes the reversible conversion of 2-phosphoglycerate (2-PG) into phosphoenolpyruvate (PEP). It is essential for the degradation of carbohydrates via glycolysis. The sequence is that of Enolase from Saccharolobus islandicus (strain M.16.27) (Sulfolobus islandicus).